Reading from the N-terminus, the 120-residue chain is Synaptobrevin (120 aa).

Residues 1-38 form a disordered region; that stretch reads MSAPPSGPAPDAQGGAPGQPTGPPGAPPNTTSNRRLQQ. Over 1–98 the chain is Cytoplasmic; it reads MSAPPSGPAP…KRKYWWKNCK (98 aa). The span at 29 to 38 shows a compositional bias: polar residues; the sequence is NTTSNRRLQQ. The 61-residue stretch at 35–95 folds into the v-SNARE coiled-coil homology domain; the sequence is RLQQTQAQVE…AKLKRKYWWK (61 aa). The chain crosses the membrane as a helical; Anchor for type IV membrane protein span at residues 99-118; it reads MMIMLGGIGAIIVIVIIIYF. Residues 119-120 lie on the Vesicular side of the membrane; it reads FT.

It belongs to the synaptobrevin family. In terms of tissue distribution, nervous system specific.

The protein resides in the cytoplasmic vesicle. It is found in the secretory vesicle. It localises to the synaptic vesicle membrane. Its subcellular location is the synapse. The protein localises to the synaptosome. This protein may play a role in packaging, transport or release of neurotransmitters. The chain is Synaptobrevin from Tetronarce californica (Pacific electric ray).